Consider the following 495-residue polypeptide: Putative lon protease homolog (495 aa).

Position 52-59 (52-59 (GPPGVGKS)) interacts with ATP. The segment at 471 to 495 (YSSETTGSQRDSTYNYANMDDRSYE) is disordered. The segment covering 472–486 (SSETTGSQRDSTYNY) has biased composition (polar residues).

This sequence belongs to the peptidase S16 family.

The polypeptide is Putative lon protease homolog (Thermoplasma volcanium (strain ATCC 51530 / DSM 4299 / JCM 9571 / NBRC 15438 / GSS1)).